We begin with the raw amino-acid sequence, 156 residues long: Small ribosomal subunit protein uS7 (156 aa).

Belongs to the universal ribosomal protein uS7 family. In terms of assembly, part of the 30S ribosomal subunit. Contacts proteins S9 and S11.

Functionally, one of the primary rRNA binding proteins, it binds directly to 16S rRNA where it nucleates assembly of the head domain of the 30S subunit. Is located at the subunit interface close to the decoding center, probably blocks exit of the E-site tRNA. In Synechococcus sp. (strain CC9902), this protein is Small ribosomal subunit protein uS7.